The primary structure comprises 439 residues: Skin secretory protein xP2 (439 aa).

The signal sequence occupies residues 1 to 22 (MNHKLFCVHFLLLILSVCYIQG). The segment at 25-351 (AGGEPAPAEG…VEVGPKTEDC (327 aa)) is disordered. 5 repeat units span residues 26–33 (GGEPAPAE), 34–41 (GVAPAPAE), 42–51 (GGAPAPAPAE), 52–59 (GEAPAPAE), and 60–69 (GGAPAPAPAE). Positions 26-343 (GGEPAPAEGV…APAPAPAPVE (318 aa)) are 33 X approximate repeats of G-G(0,1)-[EV](0,1)-A-P-[A-P](1,3)-A-E. The span at 26-345 (GGEPAPAEGV…APAPAPVEVG (320 aa)) shows a compositional bias: low complexity. A 6; approximate repeat occupies 70–77 (GAEPAPAD). Tandem repeats lie at residues 78–87 (GGAPAPAPAE), 88–97 (GGAPAPAPAE), 98–107 (GGAPAPAPAE), 108–115 (GGAPAPAE), 116–125 (GGAPAPAPAE), 126–135 (GEAPAPAPAE), 136–145 (GEAPAPAPAE), 146–153 (GEAPAPAE), and 154–163 (GEAPAPAPAE). The stretch at 164-173 (VEAPAPAPAE) is one 16; approximate repeat. 14 tandem repeats follow at residues 174–183 (GEAPAPAPAE), 184–193 (GEAPAPAPAE), 194–203 (GEAPAPAPAE), 204–215 (GEAPAPAPAPAE), 216–225 (GEAPAPAPAE), 226–235 (GEAPAPAPAE), 236–245 (GEAPAPAPAE), 246–255 (GEAPAPAPAE), 256–265 (GEAPAPAPAE), 266–275 (GEAPAPAPAE), 276–285 (GEAPAPAPAE), 286–293 (GEAPAPAE), 294–303 (GEAPAPAPAE), and 304–313 (GEAPAPAPAE). The stretch at 314–321 (GGAPSPAE) is one 31; approximate repeat. A 32; approximate repeat occupies 322–331 (GGAPAAAPAE). The 33; approximate repeat unit spans residues 332–343 (GGAPAPAPAPVE). 2 P-type domains span residues 349–392 (EDCK…FFPR) and 396–439 (AQCL…FHQK). Intrachain disulfides connect C351–C377, C361–C376, C371–C388, C398–C424, C408–C423, and C418–C435.

As to expression, skin.

Its subcellular location is the secreted. May act as a growth factor in the germinal layer of the epidermis. May also be involved in growth of regenerating glands and in protection of the skin from the external environment. The sequence is that of Skin secretory protein xP2 (p2) from Xenopus laevis (African clawed frog).